Here is a 601-residue protein sequence, read N- to C-terminus: NADH-ubiquinone oxidoreductase chain 5 (601 aa).

Helical transmembrane passes span 3–23 (LIMP…MMSY), 36–56 (VTSS…MFLL), 84–104 (FFSI…MEFS), 114–134 (INQF…LVTA), 140–160 (LFIG…WWYG), 171–191 (AILY…WLLL), 201–221 (IFML…AAAG), 240–260 (TPVS…FLLV), 272–292 (ILTM…ICAL), 324–346 (AFLH…GSII), 365–385 (MPFT…MPFL), 404–426 (NAWA…TRLI), 456–476 (LALG…PLIT), 483–503 (LYMK…AMGL), and 581–601 (LIKL…MLII).

This sequence belongs to the complex I subunit 5 family.

It is found in the mitochondrion inner membrane. The enzyme catalyses a ubiquinone + NADH + 5 H(+)(in) = a ubiquinol + NAD(+) + 4 H(+)(out). Its function is as follows. Core subunit of the mitochondrial membrane respiratory chain NADH dehydrogenase (Complex I) that is believed to belong to the minimal assembly required for catalysis. Complex I functions in the transfer of electrons from NADH to the respiratory chain. The immediate electron acceptor for the enzyme is believed to be ubiquinone. The polypeptide is NADH-ubiquinone oxidoreductase chain 5 (MT-ND5) (Dasypus novemcinctus (Nine-banded armadillo)).